The primary structure comprises 502 residues: ATP synthase subunit beta (502 aa).

Position 153-160 (153-160) interacts with ATP; the sequence is GGAGVGKT.

This sequence belongs to the ATPase alpha/beta chains family. As to quaternary structure, F-type ATPases have 2 components, CF(1) - the catalytic core - and CF(0) - the membrane proton channel. CF(1) has five subunits: alpha(3), beta(3), gamma(1), delta(1), epsilon(1). CF(0) has three main subunits: a(1), b(2) and c(9-12). The alpha and beta chains form an alternating ring which encloses part of the gamma chain. CF(1) is attached to CF(0) by a central stalk formed by the gamma and epsilon chains, while a peripheral stalk is formed by the delta and b chains.

The protein localises to the cell membrane. The enzyme catalyses ATP + H2O + 4 H(+)(in) = ADP + phosphate + 5 H(+)(out). Produces ATP from ADP in the presence of a proton gradient across the membrane. The catalytic sites are hosted primarily by the beta subunits. This is ATP synthase subunit beta from Amoebophilus asiaticus (strain 5a2).